Reading from the N-terminus, the 499-residue chain is Glycerol kinase (499 aa).

T12 contributes to the ADP binding site. Residues T12, T13, and S14 each contribute to the ATP site. T12 lines the sn-glycerol 3-phosphate pocket. An ADP-binding site is contributed by R16. Sn-glycerol 3-phosphate-binding residues include R82, E83, and Y134. Glycerol is bound by residues R82, E83, and Y134. H230 bears the Phosphohistidine; by HPr mark. D244 contacts sn-glycerol 3-phosphate. D244 and Q245 together coordinate glycerol. ADP-binding residues include T266 and G309. Positions 266, 309, 313, and 410 each coordinate ATP. G410 and N414 together coordinate ADP.

The protein belongs to the FGGY kinase family. Homotetramer and homodimer (in equilibrium). In terms of processing, the phosphoenolpyruvate-dependent sugar phosphotransferase system (PTS), including enzyme I, and histidine-containing protein (HPr) are required for the phosphorylation, which leads to the activation of the enzyme.

It carries out the reaction glycerol + ATP = sn-glycerol 3-phosphate + ADP + H(+). Its pathway is polyol metabolism; glycerol degradation via glycerol kinase pathway; sn-glycerol 3-phosphate from glycerol: step 1/1. Its activity is regulated as follows. Activated by phosphorylation and inhibited by fructose 1,6-bisphosphate (FBP). In terms of biological role, key enzyme in the regulation of glycerol uptake and metabolism. Catalyzes the phosphorylation of glycerol to yield sn-glycerol 3-phosphate. The sequence is that of Glycerol kinase from Staphylococcus epidermidis (strain ATCC 12228 / FDA PCI 1200).